The primary structure comprises 558 residues: Arginine--tRNA ligase (558 aa).

The 'HIGH' region motif lies at 119-129; it reads PNIAKPMSMGH.

Belongs to the class-I aminoacyl-tRNA synthetase family. In terms of assembly, monomer.

The protein localises to the cytoplasm. It carries out the reaction tRNA(Arg) + L-arginine + ATP = L-arginyl-tRNA(Arg) + AMP + diphosphate. This Lactobacillus johnsonii (strain CNCM I-12250 / La1 / NCC 533) protein is Arginine--tRNA ligase.